A 140-amino-acid polypeptide reads, in one-letter code: uncharacterized protein (140 aa).

The interval 62-140 (TEARAGRGGP…PQGRWGPSLG (79 aa)) is disordered. Low complexity predominate over residues 71–94 (PATARSRVSADSQGGRAGSSSPSS).

This is an uncharacterized protein from Homo sapiens (Human).